We begin with the raw amino-acid sequence, 52 residues long: Lantibiotic epidermin (52 aa).

Residues 1-30 constitute a propeptide that is removed on maturation; the sequence is MEAVKEKNDLFNLDVKVNAKESNDSGAEPR. The lanthionine (Ser-Cys) cross-link spans 33 to 37; it reads SKFIC. The segment at residues 38–41 is a cross-link (beta-methyllanthionine (Thr-Cys)); that stretch reads TPGC. Threonine 44 is subject to (Z)-2,3-didehydrobutyrine. The segment at residues 46–51 is a cross-link (lanthionine (Ser-Cys)); sequence SFNSYC. Positions 49–52 form a cross-link, S-(2-aminovinyl)-D-cysteine (Ser-Cys); the sequence is SYCC.

Belongs to the type A lantibiotic family. Maturation of lantibiotics involves the enzymatic conversion of Thr, and Ser into dehydrated AA and the formation of thioether bonds with cysteine. The C-terminal lanthionine undergoes decarboxylation. This is followed by membrane translocation and cleavage of the modified precursor. Post-translationally, the 2,3-didehydrobutyrine is determined to be the Z-isomer.

Functionally, lanthionine-containing peptide antibiotic (lantibiotic) active on Gram-positive bacteria. The bactericidal activity of lantibiotics is based on depolarization of energized bacterial cytoplasmic membranes, initiated by the formation of aqueous transmembrane pores. This chain is Lantibiotic epidermin (epiA), found in Staphylococcus epidermidis.